A 230-amino-acid polypeptide reads, in one-letter code: Cytochrome c oxidase subunit 2 (230 aa).

Over 1–14 the chain is Mitochondrial intermembrane; it reads MAHPTQLGFQDAAS. A helical transmembrane segment spans residues 15–45; that stretch reads PVMEELLHFHDHALMIVFLISALVLYVIITT. Residues 46-59 lie on the Mitochondrial matrix side of the membrane; that stretch reads VSTKLTNMYILDSQ. Residues 60-87 traverse the membrane as a helical segment; sequence EIEIVWTVLPALILILIALPSLRILYLM. At 88-230 the chain is on the mitochondrial intermembrane side; the sequence is DEINDPHLTI…NWSTLMLKDA (143 aa). Cu cation contacts are provided by H161, C196, E198, C200, H204, and M207. E198 lines the Mg(2+) pocket.

Belongs to the cytochrome c oxidase subunit 2 family. In terms of assembly, component of the cytochrome c oxidase (complex IV, CIV), a multisubunit enzyme composed of 14 subunits. The complex is composed of a catalytic core of 3 subunits MT-CO1, MT-CO2 and MT-CO3, encoded in the mitochondrial DNA, and 11 supernumerary subunits COX4I, COX5A, COX5B, COX6A, COX6B, COX6C, COX7A, COX7B, COX7C, COX8 and NDUFA4, which are encoded in the nuclear genome. The complex exists as a monomer or a dimer and forms supercomplexes (SCs) in the inner mitochondrial membrane with NADH-ubiquinone oxidoreductase (complex I, CI) and ubiquinol-cytochrome c oxidoreductase (cytochrome b-c1 complex, complex III, CIII), resulting in different assemblies (supercomplex SCI(1)III(2)IV(1) and megacomplex MCI(2)III(2)IV(2)). Found in a complex with TMEM177, COA6, COX18, COX20, SCO1 and SCO2. Interacts with TMEM177 in a COX20-dependent manner. Interacts with COX20. Interacts with COX16. Cu cation serves as cofactor.

The protein localises to the mitochondrion inner membrane. The enzyme catalyses 4 Fe(II)-[cytochrome c] + O2 + 8 H(+)(in) = 4 Fe(III)-[cytochrome c] + 2 H2O + 4 H(+)(out). Functionally, component of the cytochrome c oxidase, the last enzyme in the mitochondrial electron transport chain which drives oxidative phosphorylation. The respiratory chain contains 3 multisubunit complexes succinate dehydrogenase (complex II, CII), ubiquinol-cytochrome c oxidoreductase (cytochrome b-c1 complex, complex III, CIII) and cytochrome c oxidase (complex IV, CIV), that cooperate to transfer electrons derived from NADH and succinate to molecular oxygen, creating an electrochemical gradient over the inner membrane that drives transmembrane transport and the ATP synthase. Cytochrome c oxidase is the component of the respiratory chain that catalyzes the reduction of oxygen to water. Electrons originating from reduced cytochrome c in the intermembrane space (IMS) are transferred via the dinuclear copper A center (CU(A)) of subunit 2 and heme A of subunit 1 to the active site in subunit 1, a binuclear center (BNC) formed by heme A3 and copper B (CU(B)). The BNC reduces molecular oxygen to 2 water molecules using 4 electrons from cytochrome c in the IMS and 4 protons from the mitochondrial matrix. The polypeptide is Cytochrome c oxidase subunit 2 (mt-co2) (Formosania lacustris (Oriental stream loach)).